The sequence spans 253 residues: Tryptophan synthase alpha chain (253 aa).

Residues glutamate 47 and aspartate 58 each act as proton acceptor in the active site.

This sequence belongs to the TrpA family. In terms of assembly, tetramer of two alpha and two beta chains.

The catalysed reaction is (1S,2R)-1-C-(indol-3-yl)glycerol 3-phosphate + L-serine = D-glyceraldehyde 3-phosphate + L-tryptophan + H2O. The protein operates within amino-acid biosynthesis; L-tryptophan biosynthesis; L-tryptophan from chorismate: step 5/5. The alpha subunit is responsible for the aldol cleavage of indoleglycerol phosphate to indole and glyceraldehyde 3-phosphate. In Desulforapulum autotrophicum (strain ATCC 43914 / DSM 3382 / VKM B-1955 / HRM2) (Desulfobacterium autotrophicum), this protein is Tryptophan synthase alpha chain.